The following is a 610-amino-acid chain: UvrABC system protein C (610 aa).

The region spanning 16 to 94 (SQPGVYRMYD…IKLYQPRYNV (79 aa)) is the GIY-YIG domain. Residues 204–239 (DQVLTQLISRMETASQNLEFEEAARIRDQIQAVRRV) enclose the UVR domain.

Belongs to the UvrC family. As to quaternary structure, interacts with UvrB in an incision complex.

It is found in the cytoplasm. Its function is as follows. The UvrABC repair system catalyzes the recognition and processing of DNA lesions. UvrC both incises the 5' and 3' sides of the lesion. The N-terminal half is responsible for the 3' incision and the C-terminal half is responsible for the 5' incision. In Escherichia coli (strain SMS-3-5 / SECEC), this protein is UvrABC system protein C.